A 100-amino-acid chain; its full sequence is Pregnancy-associated protein bPAP (100 aa).

The disordered stretch occupies residues 1–40; that stretch reads DSELAGPRGARGPHGLSGPHGLSGLXGPXGYTGPIGMXGL. Low complexity predominate over residues 13–29; the sequence is PHGLSGPHGLSGLXGPX.

In terms of tissue distribution, detected at high levels in the urine of pregnant females (at protein level) and at far lower levels in the urine of nonpregnant females.

The chain is Pregnancy-associated protein bPAP from Bos taurus (Bovine).